The chain runs to 333 residues: Anthranilate phosphoribosyltransferase (333 aa).

5-phospho-alpha-D-ribose 1-diphosphate contacts are provided by residues Gly78, Gly81–Asp82, Thr86, Asn88–Thr91, Lys106–Ser114, and Ser118. Gly78 provides a ligand contact to anthranilate. Position 90 (Ser90) interacts with Mg(2+). Asn109 contacts anthranilate. Arg164 is an anthranilate binding site. Mg(2+) contacts are provided by Asp222 and Glu223.

It belongs to the anthranilate phosphoribosyltransferase family. As to quaternary structure, homodimer. Requires Mg(2+) as cofactor.

It catalyses the reaction N-(5-phospho-beta-D-ribosyl)anthranilate + diphosphate = 5-phospho-alpha-D-ribose 1-diphosphate + anthranilate. Its pathway is amino-acid biosynthesis; L-tryptophan biosynthesis; L-tryptophan from chorismate: step 2/5. Catalyzes the transfer of the phosphoribosyl group of 5-phosphorylribose-1-pyrophosphate (PRPP) to anthranilate to yield N-(5'-phosphoribosyl)-anthranilate (PRA). The polypeptide is Anthranilate phosphoribosyltransferase (Natronomonas pharaonis (strain ATCC 35678 / DSM 2160 / CIP 103997 / JCM 8858 / NBRC 14720 / NCIMB 2260 / Gabara) (Halobacterium pharaonis)).